The following is a 519-amino-acid chain: Putative tyrosine carboxypeptidase MATCAP2 (519 aa).

A disordered region spans residues Ser-63–Ala-103. His-330 is a Zn(2+) binding site. Residue Glu-331 is the Nucleophile of the active site. His-335 and Glu-366 together coordinate Zn(2+).

Requires Zn(2+) as cofactor.

Its function is as follows. Putative tyrosine carboxypeptidase. The sequence is that of Putative tyrosine carboxypeptidase MATCAP2 from Mus musculus (Mouse).